A 246-amino-acid polypeptide reads, in one-letter code: MADKEAKKVPSVPESLLKRRQAYAAAKAKRLKRLLAQKKFRKAQRKIIYERAKAYHKEYRHMYRQEIRMARMARKAGNYYVPAEPKLAFVIRIRGINGVSPKVRKVLQLLRLRQIFNGTFVKLNKASINMLRIVEPYIAWGYPNLKSVHDLIYKRGYGKINKKRIALTDNSLIRKRLGKLGIICMEDVIHEIYTVGKNFKVVNNFLWPFKLSSPRGGMKKKTIHFVEGGDAGNREDQINRLIRRMN.

The residue at position 1 (methionine 1) is an N-acetylmethionine. Tandem repeats lie at residues 7 to 17 (KKVPSVPESLL), 18 to 28 (KRRQAYAAAKA), 29 to 40 (KRLKRLLAQKKF), and 41 to 52 (RKAQRKIIYERA). Positions 7–52 (KKVPSVPESLLKRRQAYAAAKAKRLKRLLAQKKFRKAQRKIIYERA) are 4 X 12 AA tandem repeats.

It belongs to the universal ribosomal protein uL30 family. In terms of assembly, component of the large ribosomal subunit.

The protein resides in the cytoplasm. Component of the large ribosomal subunit. The ribosome is a large ribonucleoprotein complex responsible for the synthesis of proteins in the cell. Binds to G-rich structures in 28S rRNA and in mRNAs. Plays a regulatory role in the translation apparatus; inhibits cell-free translation of mRNAs. The protein is Large ribosomal subunit protein uL30 (RPL7) of Gallus gallus (Chicken).